We begin with the raw amino-acid sequence, 329 residues long: Trans-1,2-dihydrobenzene-1,2-diol dehydrogenase (329 aa).

This sequence belongs to the Gfo/Idh/MocA family. As to quaternary structure, homodimer. As to expression, lens, liver and small intestine.

The enzyme catalyses (1R,2R)-1,2-dihydrobenzene-1,2-diol + NADP(+) = catechol + NADPH + H(+). The catalysed reaction is D-xylose + NADP(+) = D-xylono-1,5-lactone + NADPH + H(+). With respect to regulation, stimulated by various salts. This is Trans-1,2-dihydrobenzene-1,2-diol dehydrogenase (DHDH) from Oryctolagus cuniculus (Rabbit).